A 474-amino-acid chain; its full sequence is Methylenetetrahydrofolate--tRNA-(uracil-5-)-methyltransferase TrmFO (474 aa).

Position 14–19 (14–19) interacts with FAD; the sequence is GGGLAG.

This sequence belongs to the MnmG family. TrmFO subfamily. FAD is required as a cofactor.

The protein localises to the cytoplasm. The enzyme catalyses uridine(54) in tRNA + (6R)-5,10-methylene-5,6,7,8-tetrahydrofolate + NADH + H(+) = 5-methyluridine(54) in tRNA + (6S)-5,6,7,8-tetrahydrofolate + NAD(+). It carries out the reaction uridine(54) in tRNA + (6R)-5,10-methylene-5,6,7,8-tetrahydrofolate + NADPH + H(+) = 5-methyluridine(54) in tRNA + (6S)-5,6,7,8-tetrahydrofolate + NADP(+). Its function is as follows. Catalyzes the folate-dependent formation of 5-methyl-uridine at position 54 (M-5-U54) in all tRNAs. The sequence is that of Methylenetetrahydrofolate--tRNA-(uracil-5-)-methyltransferase TrmFO from Caulobacter vibrioides (strain ATCC 19089 / CIP 103742 / CB 15) (Caulobacter crescentus).